We begin with the raw amino-acid sequence, 351 residues long: Cytochrome c biogenesis protein CcsA (351 aa).

8 consecutive transmembrane segments (helical) span residues V17 to I37, N38 to A58, L68 to I88, L97 to L117, M143 to I163, I259 to N279, W286 to L306, and A320 to L340.

This sequence belongs to the CcmF/CycK/Ccl1/NrfE/CcsA family. In terms of assembly, may interact with ccs1.

The protein localises to the cellular thylakoid membrane. Functionally, required during biogenesis of c-type cytochromes (cytochrome c6 and cytochrome f) at the step of heme attachment. In Trichormus variabilis (strain ATCC 29413 / PCC 7937) (Anabaena variabilis), this protein is Cytochrome c biogenesis protein CcsA.